A 278-amino-acid polypeptide reads, in one-letter code: HTH-type transcriptional activator RhaS (278 aa).

The HTH araC/xylS-type domain maps to N174–G272. 2 DNA-binding regions (H-T-H motif) span residues D191 to T212 and V239 to F262.

In terms of assembly, binds DNA as a dimer.

The protein resides in the cytoplasm. In terms of biological role, activates expression of the rhaBAD and rhaT operons. The protein is HTH-type transcriptional activator RhaS of Shigella flexneri serotype 5b (strain 8401).